The chain runs to 456 residues: MLNNAMSVVILAAGKGTRMYSDLPKVLHTLAGKTMVQHVIDAANELGAAHVHLVYGHGGDLLKQALKNDNLNWVLQAEQLGTGHAMQQAAPFFADDEDILMLYGDVPLISVETLQRLRDAKPQGGIGLLTVKLDDPTGYGRITRENGKVTGIVEHKDATDEQRQIQEINTGILIANGADMKRWLAKLTNNNAQGEYYITDIIALAYQEGREIVAVHPQRLSEVEGVNNRLQLSRLERVYQSEQAEKLLLAGVMLRDPARFDLRGTLTHGRDVEIDTNVIIEGNVTLGHRVKIGAGCVIKNSVIGDDCEISPYTVVEDANLAAACTIGPFARLRPGAELLEGAHVGNFVEMKKARLGKGSKAGHLTYLGDAEIGDNVNIGAGTITCNYDGANKFKTIIGDDVFVGSDTQLVAPVTVGKGATIAAGTTVTRNIGENALAISRVPQAQKEGWRRPVKKK.

Residues 1 to 229 (MLNNAMSVVI…LSEVEGVNNR (229 aa)) form a pyrophosphorylase region. UDP-N-acetyl-alpha-D-glucosamine is bound by residues 11-14 (LAAG), lysine 25, glutamine 76, 81-82 (GT), 103-105 (YGD), glycine 140, glutamate 154, asparagine 169, and asparagine 227. Aspartate 105 is a binding site for Mg(2+). Asparagine 227 provides a ligand contact to Mg(2+). The linker stretch occupies residues 230 to 250 (LQLSRLERVYQSEQAEKLLLA). The segment at 251–456 (GVMLRDPARF…EGWRRPVKKK (206 aa)) is N-acetyltransferase. Positions 333 and 351 each coordinate UDP-N-acetyl-alpha-D-glucosamine. Histidine 363 (proton acceptor) is an active-site residue. UDP-N-acetyl-alpha-D-glucosamine contacts are provided by tyrosine 366 and asparagine 377. Acetyl-CoA-binding positions include alanine 380, 386–387 (NY), serine 405, alanine 423, and arginine 440.

In the N-terminal section; belongs to the N-acetylglucosamine-1-phosphate uridyltransferase family. This sequence in the C-terminal section; belongs to the transferase hexapeptide repeat family. Homotrimer. Requires Mg(2+) as cofactor.

It is found in the cytoplasm. The enzyme catalyses alpha-D-glucosamine 1-phosphate + acetyl-CoA = N-acetyl-alpha-D-glucosamine 1-phosphate + CoA + H(+). It carries out the reaction N-acetyl-alpha-D-glucosamine 1-phosphate + UTP + H(+) = UDP-N-acetyl-alpha-D-glucosamine + diphosphate. It participates in nucleotide-sugar biosynthesis; UDP-N-acetyl-alpha-D-glucosamine biosynthesis; N-acetyl-alpha-D-glucosamine 1-phosphate from alpha-D-glucosamine 6-phosphate (route II): step 2/2. Its pathway is nucleotide-sugar biosynthesis; UDP-N-acetyl-alpha-D-glucosamine biosynthesis; UDP-N-acetyl-alpha-D-glucosamine from N-acetyl-alpha-D-glucosamine 1-phosphate: step 1/1. It functions in the pathway bacterial outer membrane biogenesis; LPS lipid A biosynthesis. Functionally, catalyzes the last two sequential reactions in the de novo biosynthetic pathway for UDP-N-acetylglucosamine (UDP-GlcNAc). The C-terminal domain catalyzes the transfer of acetyl group from acetyl coenzyme A to glucosamine-1-phosphate (GlcN-1-P) to produce N-acetylglucosamine-1-phosphate (GlcNAc-1-P), which is converted into UDP-GlcNAc by the transfer of uridine 5-monophosphate (from uridine 5-triphosphate), a reaction catalyzed by the N-terminal domain. The protein is Bifunctional protein GlmU of Escherichia coli O127:H6 (strain E2348/69 / EPEC).